Here is a 512-residue protein sequence, read N- to C-terminus: Kynurenine 3-monooxygenase (512 aa).

Belongs to the aromatic-ring hydroxylase family. KMO subfamily. The cofactor is FAD.

The protein localises to the mitochondrion outer membrane. The catalysed reaction is L-kynurenine + NADPH + O2 + H(+) = 3-hydroxy-L-kynurenine + NADP(+) + H2O. The protein operates within cofactor biosynthesis; NAD(+) biosynthesis; quinolinate from L-kynurenine: step 1/3. Functionally, catalyzes the hydroxylation of L-kynurenine (L-Kyn) to form 3-hydroxy-L-kynurenine (L-3OHKyn). Required for synthesis of quinolinic acid. The sequence is that of Kynurenine 3-monooxygenase (bna4) from Aspergillus fumigatus (strain ATCC MYA-4609 / CBS 101355 / FGSC A1100 / Af293) (Neosartorya fumigata).